A 373-amino-acid polypeptide reads, in one-letter code: Dual-specificity RNA methyltransferase RlmN (373 aa).

E94 (proton acceptor) is an active-site residue. One can recognise a Radical SAM core domain in the interval 100–339 (EDDRATLCVS…VIVRKTRGDD (240 aa)). An intrachain disulfide couples C107 to C344. 3 residues coordinate [4Fe-4S] cluster: C114, C118, and C121. S-adenosyl-L-methionine contacts are provided by residues 168-169 (GE), S200, 222-224 (SIH), and N301. Catalysis depends on C344, which acts as the S-methylcysteine intermediate.

Belongs to the radical SAM superfamily. RlmN family. [4Fe-4S] cluster serves as cofactor.

It localises to the cytoplasm. The enzyme catalyses adenosine(2503) in 23S rRNA + 2 reduced [2Fe-2S]-[ferredoxin] + 2 S-adenosyl-L-methionine = 2-methyladenosine(2503) in 23S rRNA + 5'-deoxyadenosine + L-methionine + 2 oxidized [2Fe-2S]-[ferredoxin] + S-adenosyl-L-homocysteine. It catalyses the reaction adenosine(37) in tRNA + 2 reduced [2Fe-2S]-[ferredoxin] + 2 S-adenosyl-L-methionine = 2-methyladenosine(37) in tRNA + 5'-deoxyadenosine + L-methionine + 2 oxidized [2Fe-2S]-[ferredoxin] + S-adenosyl-L-homocysteine. Its function is as follows. Specifically methylates position 2 of adenine 2503 in 23S rRNA and position 2 of adenine 37 in tRNAs. m2A2503 modification seems to play a crucial role in the proofreading step occurring at the peptidyl transferase center and thus would serve to optimize ribosomal fidelity. The chain is Dual-specificity RNA methyltransferase RlmN from Shewanella oneidensis (strain ATCC 700550 / JCM 31522 / CIP 106686 / LMG 19005 / NCIMB 14063 / MR-1).